The primary structure comprises 209 residues: Transcription elongation factor A protein-like 4 (209 aa).

M1 carries the post-translational modification N-acetylmethionine. The tract at residues 1–125 (MEKLYNENEG…VPRKAKRKTN (125 aa)) is disordered. Positions 25–96 (QDERKPEVAC…GSEREGKPES (72 aa)) are enriched in basic and acidic residues. Phosphoserine occurs at positions 88 and 96.

Belongs to the TFS-II family. TFA subfamily.

The protein localises to the nucleus. Functionally, may be involved in transcriptional regulation. The chain is Transcription elongation factor A protein-like 4 (TCEAL4) from Pongo abelii (Sumatran orangutan).